The sequence spans 386 residues: Bifunctional enzyme IspD/IspF (386 aa).

Residues 1–230 (MNSVPSLPGQ…LEEQSMSVIP (230 aa)) form a 2-C-methyl-D-erythritol 4-phosphate cytidylyltransferase region. The interval 231–386 (RTGMGFDVHR…AQAVATVVSG (156 aa)) is 2-C-methyl-D-erythritol 2,4-cyclodiphosphate synthase. A divalent metal cation contacts are provided by Asp237 and His239. Residues 237-239 (DVH) and 263-264 (HS) each bind 4-CDP-2-C-methyl-D-erythritol 2-phosphate. His271 lines the a divalent metal cation pocket. Residues 285 to 287 (DIG), 361 to 364 (TTTE), and Arg371 contribute to the 4-CDP-2-C-methyl-D-erythritol 2-phosphate site.

This sequence in the N-terminal section; belongs to the IspD/TarI cytidylyltransferase family. IspD subfamily. In the C-terminal section; belongs to the IspF family. A divalent metal cation serves as cofactor.

It carries out the reaction 2-C-methyl-D-erythritol 4-phosphate + CTP + H(+) = 4-CDP-2-C-methyl-D-erythritol + diphosphate. The enzyme catalyses 4-CDP-2-C-methyl-D-erythritol 2-phosphate = 2-C-methyl-D-erythritol 2,4-cyclic diphosphate + CMP. It functions in the pathway isoprenoid biosynthesis; isopentenyl diphosphate biosynthesis via DXP pathway; isopentenyl diphosphate from 1-deoxy-D-xylulose 5-phosphate: step 2/6. Its pathway is isoprenoid biosynthesis; isopentenyl diphosphate biosynthesis via DXP pathway; isopentenyl diphosphate from 1-deoxy-D-xylulose 5-phosphate: step 4/6. In terms of biological role, bifunctional enzyme that catalyzes the formation of 4-diphosphocytidyl-2-C-methyl-D-erythritol from CTP and 2-C-methyl-D-erythritol 4-phosphate (MEP) (IspD), and catalyzes the conversion of 4-diphosphocytidyl-2-C-methyl-D-erythritol 2-phosphate (CDP-ME2P) to 2-C-methyl-D-erythritol 2,4-cyclodiphosphate (ME-CPP) with a corresponding release of cytidine 5-monophosphate (CMP) (IspF). The chain is Bifunctional enzyme IspD/IspF from Novosphingobium aromaticivorans (strain ATCC 700278 / DSM 12444 / CCUG 56034 / CIP 105152 / NBRC 16084 / F199).